A 121-amino-acid chain; its full sequence is Large ribosomal subunit protein bL12 (121 aa).

This sequence belongs to the bacterial ribosomal protein bL12 family. Homodimer. Part of the ribosomal stalk of the 50S ribosomal subunit. Forms a multimeric L10(L12)X complex, where L10 forms an elongated spine to which 2 to 4 L12 dimers bind in a sequential fashion. Binds GTP-bound translation factors.

Its function is as follows. Forms part of the ribosomal stalk which helps the ribosome interact with GTP-bound translation factors. Is thus essential for accurate translation. The sequence is that of Large ribosomal subunit protein bL12 from Xanthomonas euvesicatoria pv. vesicatoria (strain 85-10) (Xanthomonas campestris pv. vesicatoria).